A 440-amino-acid polypeptide reads, in one-letter code: Gamma-aminobutyric acid receptor subunit pi (440 aa).

Residues 1 to 23 (MKRSLHLTFVCLSLFSARMCVQG) form the signal peptide. Residues 24-241 (NQFNIEVSRS…LVLQFELQRN (218 aa)) are Extracellular-facing. Asn-43, Asn-102, and Asn-145 each carry an N-linked (GlcNAc...) asparagine glycan. Cys-160 and Cys-174 are joined by a disulfide. 2 N-linked (GlcNAc...) asparagine glycosylation sites follow: Asn-196 and Asn-228. Residues 242 to 262 (VLYFILETYVPSTFLVVLSWV) form a helical membrane-spanning segment. Residues 263–270 (SFWISLDS) are Cytoplasmic-facing. Residues 271-290 (VPARTCIGVTTVLSMTTLMI) form a helical membrane-spanning segment. Topologically, residues 291–301 (GSRTSLPNTNC) are extracellular. Residues 302–322 (FIKAIDVYLGICFSFVFGALL) traverse the membrane as a helical segment. Residues 323 to 419 (EYAVAHYSSL…NPSNVDRYSK (97 aa)) lie on the Cytoplasmic side of the membrane. The chain crosses the membrane as a helical span at residues 420-440 (LLFPLIFMLANVFYWAYYMYF).

It belongs to the ligand-gated ion channel (TC 1.A.9) family. Gamma-aminobutyric acid receptor (TC 1.A.9.5) subfamily. GABRP sub-subfamily. As to quaternary structure, heteropentamer, formed by a combination of alpha (GABRA1-6), beta (GABRB1-3), gamma (GABRG1-3), delta (GABRD), epsilon (GABRE), rho (GABRR1-3), pi (GABRP) and theta (GABRQ) chains, each subunit exhibiting distinct physiological and pharmacological properties.

The protein resides in the cell membrane. The protein localises to the apical cell membrane. It carries out the reaction chloride(in) = chloride(out). Functionally, pi subunit of the heteropentameric ligand-gated chloride channel gated by gamma-aminobutyric acid (GABA). GABA-gated chloride channels, also named GABA(A) receptors (GABAAR), consist of five subunits arranged around a central pore and contain GABA active binding site(s) located at the alpha and beta subunit interfaces. When activated by GABA, GABAARs selectively allow the flow of chloride anions across the cell membrane down their electrochemical gradient. Pi-containing GABAARs are mostly located in peripheral tissues. In the uterus, pi subunits modulate uterus contraction by altering the sensitivity of GABAARs to pregnanolone. In the lungs, pi-containing GABAARs contribute to pulmonary fluid transport via luminal secretion of chloride. The chain is Gamma-aminobutyric acid receptor subunit pi (GABRP) from Bos taurus (Bovine).